The following is a 163-amino-acid chain: Neurotrophin-3 (163 aa).

Residues 1–3 form the signal peptide; it reads IQS. Positions 4 to 119 are excised as a propeptide; sequence TSMDQGILTE…VLNRTSRRKR (116 aa). Positions 35–61 are disordered; that stretch reads KQTARTKDGTQTTVKKSEAEADATASQ. The N-linked (GlcNAc...) asparagine glycan is linked to Asn-112.

It belongs to the NGF-beta family.

Its subcellular location is the secreted. Its function is as follows. Seems to promote the survival of visceral and proprioceptive sensory neurons. The polypeptide is Neurotrophin-3 (NTF3) (Corallus caninus (Emerald tree boa)).